A 237-amino-acid chain; its full sequence is Ribitol-5-phosphate cytidylyltransferase (237 aa).

CTP contacts are provided by residues 7–10 (LAGG) and 80–86 (GEDRNET).

It belongs to the IspD/TarI cytidylyltransferase family. TarI subfamily.

It catalyses the reaction D-ribitol 5-phosphate + CTP + H(+) = CDP-L-ribitol + diphosphate. The protein operates within cell wall biogenesis; poly(ribitol phosphate) teichoic acid biosynthesis. Its function is as follows. Catalyzes the transfer of the cytidylyl group of CTP to D-ribitol 5-phosphate. The sequence is that of Ribitol-5-phosphate cytidylyltransferase from Listeria monocytogenes serotype 4b (strain F2365).